The sequence spans 239 residues: Type II restriction enzyme Eco47II (239 aa).

It catalyses the reaction Endonucleolytic cleavage of DNA to give specific double-stranded fragments with terminal 5'-phosphates.. Its function is as follows. A P subtype restriction enzyme that recognizes the double-stranded sequence 5'-GGNCC-3'; the cleavage site is unknown. This Escherichia coli protein is Type II restriction enzyme Eco47II.